The following is a 125-amino-acid chain: Holo-[acyl-carrier-protein] synthase (125 aa).

Mg(2+) is bound by residues D8 and E57.

This sequence belongs to the P-Pant transferase superfamily. AcpS family. Mg(2+) is required as a cofactor.

Its subcellular location is the cytoplasm. It catalyses the reaction apo-[ACP] + CoA = holo-[ACP] + adenosine 3',5'-bisphosphate + H(+). Transfers the 4'-phosphopantetheine moiety from coenzyme A to a Ser of acyl-carrier-protein. This chain is Holo-[acyl-carrier-protein] synthase, found in Geobacter sp. (strain M21).